A 143-amino-acid polypeptide reads, in one-letter code: Protein RJ1 (143 aa).

A signal peptide spans 1–26 (MARVMTRGMARVSTLATVRVSTLARA).

This Human herpesvirus 6A (strain Uganda-1102) (HHV-6 variant A) protein is Protein RJ1 (RJ1).